A 108-amino-acid polypeptide reads, in one-letter code: MDNDNDENTIRVITPNKKSGEIYGIVEKMSGASRLIVMCEDGVTRNCRIPGKMKKRMWIREGDLVIVKPWEFQDEKGDIIYRYTKTQAAYLSRNHMLPEIIDVFNEKQ.

The region spanning 10–84 (IRVITPNKKS…EKGDIIYRYT (75 aa)) is the S1-like domain.

It belongs to the eIF-1A family.

Its function is as follows. Seems to be required for maximal rate of protein biosynthesis. Enhances ribosome dissociation into subunits and stabilizes the binding of the initiator Met-tRNA(I) to 40 S ribosomal subunits. The polypeptide is Translation initiation factor 1A (Picrophilus torridus (strain ATCC 700027 / DSM 9790 / JCM 10055 / NBRC 100828 / KAW 2/3)).